The chain runs to 765 residues: Probable dipeptidyl peptidase 4 (765 aa).

The N-terminal stretch at 1–14 (MKWSILLLVGCAAA) is a signal peptide. 8 N-linked (GlcNAc...) asparagine glycosylation sites follow: N35, N78, N101, N110, N169, N218, N465, and N490. Residue S613 is the Charge relay system of the active site. N665 carries N-linked (GlcNAc...) asparagine glycosylation. Catalysis depends on charge relay system residues D690 and H725.

This sequence belongs to the peptidase S9B family.

The protein localises to the secreted. The catalysed reaction is Release of an N-terminal dipeptide, Xaa-Yaa-|-Zaa-, from a polypeptide, preferentially when Yaa is Pro, provided Zaa is neither Pro nor hydroxyproline.. Its function is as follows. Extracellular dipeptidyl-peptidase which removes N-terminal dipeptides sequentially from polypeptides having unsubstituted N-termini provided that the penultimate residue is proline. Contributes to pathogenicity. This is Probable dipeptidyl peptidase 4 (dpp4) from Aspergillus fumigatus (strain CBS 144.89 / FGSC A1163 / CEA10) (Neosartorya fumigata).